The chain runs to 174 residues: Adenylate kinase (174 aa).

The segment at 12–41 is NMP; sequence STGDMLRAAIKAGTPLGLEAKKIIDEGGLV. Residues threonine 13, arginine 18, 39–41, 67–70, and glutamine 74 each bind AMP; these read GLV and GFPR. The segment at 104–141 is LID; the sequence is GRRVHLASGRTYHIAYNPPKVEGKDDVTGEDLIQRDDD. Residues arginine 105 and 114–115 each bind ATP; that span reads TY. Residues arginine 138 and arginine 149 each contribute to the AMP site.

This sequence belongs to the adenylate kinase family. As to quaternary structure, monomer.

It is found in the cytoplasm. The enzyme catalyses AMP + ATP = 2 ADP. It participates in purine metabolism; AMP biosynthesis via salvage pathway; AMP from ADP: step 1/1. Its function is as follows. Catalyzes the reversible transfer of the terminal phosphate group between ATP and AMP. Plays an important role in cellular energy homeostasis and in adenine nucleotide metabolism. This chain is Adenylate kinase, found in Neisseria animalis.